Here is a 316-residue protein sequence, read N- to C-terminus: MALEHLRIASRRSQLAMVQTNWVKAELEKAHPGLAISVEAMATQGDKILDVALAKIGDKGLFTKELEAQMLVGRAEIAVHSLKDLPTNLPEGLMLGCITEREDPADALVVNSKNAEYTLETLPEGSIVGTSSLRRLAQLRYHYPHLQFKDVRGNVITRLEKLDSGNYDCLILAAAGLSRLGFGDRIHQSIPGNISLHAVGQGALGIECVCDRPEVMELIQVLNHAPTSARCLAERAFLRVLEGGCQVPIGVNTQIEGDTIQLTGMVASLDGKRLIRDEQAGPLADPEAVGRDLAHKLKDQGAGEILQEIFEMERGQ.

At Cys-245 the chain carries S-(dipyrrolylmethanemethyl)cysteine.

Belongs to the HMBS family. Monomer. The cofactor is dipyrromethane.

It catalyses the reaction 4 porphobilinogen + H2O = hydroxymethylbilane + 4 NH4(+). It participates in porphyrin-containing compound metabolism; protoporphyrin-IX biosynthesis; coproporphyrinogen-III from 5-aminolevulinate: step 2/4. The protein operates within porphyrin-containing compound metabolism; chlorophyll biosynthesis. Tetrapolymerization of the monopyrrole PBG into the hydroxymethylbilane pre-uroporphyrinogen in several discrete steps. The protein is Porphobilinogen deaminase of Synechococcus sp. (strain CC9311).